Consider the following 155-residue polypeptide: Large ribosomal subunit protein uL30 (155 aa).

It belongs to the universal ribosomal protein uL30 family. Part of the 50S ribosomal subunit.

The polypeptide is Large ribosomal subunit protein uL30 (Cenarchaeum symbiosum (strain A)).